Reading from the N-terminus, the 426-residue chain is Serine--tRNA ligase (426 aa).

233 to 235 (TSE) contributes to the L-serine binding site. Residue 264–266 (RSE) coordinates ATP. Glu287 provides a ligand contact to L-serine. 351 to 354 (EISS) contributes to the ATP binding site. Ser387 serves as a coordination point for L-serine.

It belongs to the class-II aminoacyl-tRNA synthetase family. Type-1 seryl-tRNA synthetase subfamily. Homodimer. The tRNA molecule binds across the dimer.

It localises to the cytoplasm. It carries out the reaction tRNA(Ser) + L-serine + ATP = L-seryl-tRNA(Ser) + AMP + diphosphate + H(+). The catalysed reaction is tRNA(Sec) + L-serine + ATP = L-seryl-tRNA(Sec) + AMP + diphosphate + H(+). Its pathway is aminoacyl-tRNA biosynthesis; selenocysteinyl-tRNA(Sec) biosynthesis; L-seryl-tRNA(Sec) from L-serine and tRNA(Sec): step 1/1. Its function is as follows. Catalyzes the attachment of serine to tRNA(Ser). Is also able to aminoacylate tRNA(Sec) with serine, to form the misacylated tRNA L-seryl-tRNA(Sec), which will be further converted into selenocysteinyl-tRNA(Sec). This is Serine--tRNA ligase from Xylella fastidiosa (strain 9a5c).